We begin with the raw amino-acid sequence, 572 residues long: MFASQHATFNHVWSSLLLEELHRLGVRDIALASGSRSAPLTMAAAAHAGFRRHLHFDERGLGFMALGLAKGSGRPVAVIMTSGTAVANLWPAVAEAQLTGVPLIILSADRPPELIDNGANQAIDQQGIFGRYPVYQQNLPSPTPTIPAAFVLSSVDQVLAQQALTPGPVHFNCMYPEPLYPGDEYLDFSGYLAPLGDWLHSSEPWSPWQQNEQICPRQPDWAALQGKRGIIVAGRIQDPAQAQVVAELAERLGWPLLADLQSQIRFDARNLIHMDLALQNSCFVAELARAEVLLQFGARLISKRLGQFIKQHPWQDYWLVDPQPARLDPDYRLRRRLVCEPAAFAATHKVSTRHLPWHRLAERQQSATRQIRSACDRFSELGVCHRLGNLIQGQLFVGNSMPARLMDMLGEAGKGPSRVMTNRGASGIDGLIATAYGFAQSSEQPTTLLIGDLSALHDLNSLALLGKSSRPLVVILLNNDGGSIFRMLPVPTGDRLLETYYCLPHGLHFEHAAAMFGLHYRAPTTLAEFEQAYTAALKKPELEKKVTLIEIKVPSSEVAEDLKALGAAIRGL.

The protein belongs to the TPP enzyme family. MenD subfamily. As to quaternary structure, homodimer. It depends on Mg(2+) as a cofactor. Mn(2+) is required as a cofactor. Thiamine diphosphate serves as cofactor.

It catalyses the reaction isochorismate + 2-oxoglutarate + H(+) = 5-enolpyruvoyl-6-hydroxy-2-succinyl-cyclohex-3-ene-1-carboxylate + CO2. Its pathway is quinol/quinone metabolism; 1,4-dihydroxy-2-naphthoate biosynthesis; 1,4-dihydroxy-2-naphthoate from chorismate: step 2/7. It participates in quinol/quinone metabolism; menaquinone biosynthesis. Functionally, catalyzes the thiamine diphosphate-dependent decarboxylation of 2-oxoglutarate and the subsequent addition of the resulting succinic semialdehyde-thiamine pyrophosphate anion to isochorismate to yield 2-succinyl-5-enolpyruvyl-6-hydroxy-3-cyclohexene-1-carboxylate (SEPHCHC). This chain is 2-succinyl-5-enolpyruvyl-6-hydroxy-3-cyclohexene-1-carboxylate synthase, found in Aeromonas salmonicida (strain A449).